The primary structure comprises 199 residues: 3-isopropylmalate dehydratase small subunit (199 aa).

This sequence belongs to the LeuD family. LeuD type 1 subfamily. Heterodimer of LeuC and LeuD.

The enzyme catalyses (2R,3S)-3-isopropylmalate = (2S)-2-isopropylmalate. The protein operates within amino-acid biosynthesis; L-leucine biosynthesis; L-leucine from 3-methyl-2-oxobutanoate: step 2/4. Its function is as follows. Catalyzes the isomerization between 2-isopropylmalate and 3-isopropylmalate, via the formation of 2-isopropylmaleate. This chain is 3-isopropylmalate dehydratase small subunit, found in Kocuria rhizophila (strain ATCC 9341 / DSM 348 / NBRC 103217 / DC2201).